The sequence spans 495 residues: B3 domain-containing protein Os01g0234100 (495 aa).

2 disordered regions span residues 1–25 (MAID…KMEQ) and 88–108 (PGIP…NTTE). Residues 92–108 (QTCNTQNTSNGRTNTTE) are compositionally biased toward polar residues. Residues 152–243 (FVKHMLHSHV…KFKVHIIRDK (92 aa)) constitute a DNA-binding region (TF-B3). Over residues 268–282 (EATDNATKPKEDPET) the composition is skewed to basic and acidic residues. The disordered stretch occupies residues 268–289 (EATDNATKPKEDPETTRVSSKV).

The protein resides in the nucleus. The protein is B3 domain-containing protein Os01g0234100 of Oryza sativa subsp. japonica (Rice).